Here is a 539-residue protein sequence, read N- to C-terminus: Putative cysteine ligase BshC (539 aa).

Residues 455 to 475 adopt a coiled-coil conformation; sequence LQKNAAFIQDQLLFLERTVTK.

This sequence belongs to the BshC family.

Its function is as follows. Involved in bacillithiol (BSH) biosynthesis. May catalyze the last step of the pathway, the addition of cysteine to glucosamine malate (GlcN-Mal) to generate BSH. This chain is Putative cysteine ligase BshC, found in Bacillus velezensis (strain DSM 23117 / BGSC 10A6 / LMG 26770 / FZB42) (Bacillus amyloliquefaciens subsp. plantarum).